Here is a 719-residue protein sequence, read N- to C-terminus: uncharacterized protein (719 aa).

The stretch at 64–100 (IQNLNQRKEEVIRLIAEQDKLTDNLKRKIEQSVKLQE) forms a coiled coil. The S1 motif domain maps to 649–718 (GMELQGTVRN…QKGRVSLSMV (70 aa)).

This is an uncharacterized protein from Bacillus subtilis (strain 168).